The primary structure comprises 428 residues: MAKTKPILNVAFIGHVDAGKSTTVGRLLLDGGAIDPQLIVRLRKEAEEKGKAGFEFAYVMDGLKEERERGVTIDVAHKKFPTAKYEVTIVDCPGHRDFIKNMITGASQADAAVLVVNVDDAKSGIQPQTREHVFLIRTLGVRQLAVAVNKMDTVNFSEADYNELKKMIGDQLLKMIGFNPEQINFVPVASLHGDNVFKKSERTPWYKGPTIAEVIDGFQPPEKPTNLPLRLPIQDVYSITGVGTVPVGRVETGIIKPGDKVVFEPAGAIGEIKTVEMHHEQLPSAEPGDNIGFNVRGVGKKDIKRGDVLGHTTNPPTVATDFTAQIVVLQHPSVLTVGYTPVFHTHTAQIACTFAEIQKKLNPATGEVLEENPDFLKAGDAAIVKLIPTKPMVIESVKEIPQLGRFAIRDMGMTVAAGMAIQVTAKNK.

The 221-residue stretch at 5–225 (KPILNVAFIG…DGFQPPEKPT (221 aa)) folds into the tr-type G domain. The G1 stretch occupies residues 14 to 21 (GHVDAGKS). Position 14-21 (14-21 (GHVDAGKS)) interacts with GTP. Ser-21 contributes to the Mg(2+) binding site. Positions 70-74 (GVTID) are G2. The G3 stretch occupies residues 91–94 (DCPG). GTP contacts are provided by residues 91-95 (DCPGH) and 149-152 (NKMD). A G4 region spans residues 149 to 152 (NKMD). The interval 189–191 (ASL) is G5.

It belongs to the TRAFAC class translation factor GTPase superfamily. Classic translation factor GTPase family. EF-Tu/EF-1A subfamily.

It is found in the cytoplasm. The enzyme catalyses GTP + H2O = GDP + phosphate + H(+). In terms of biological role, GTP hydrolase that promotes the GTP-dependent binding of aminoacyl-tRNA to the A-site of ribosomes during protein biosynthesis. This Methanococcus vannielii (strain ATCC 35089 / DSM 1224 / JCM 13029 / OCM 148 / SB) protein is Elongation factor 1-alpha.